A 248-amino-acid chain; its full sequence is Small ribosomal subunit protein uS3 (248 aa).

The 70-residue stretch at 39 to 108 folds into the KH type-2 domain; that stretch reads IRKLVSQKLA…TVAVNVAEIP (70 aa). Residues 212 to 248 are disordered; the sequence is KTETLARPPRKSDERRREDGERPSRRRPTARRRPGGE. A compositionally biased stretch (basic and acidic residues) spans 221–234; sequence RKSDERRREDGERP. The span at 235–248 shows a compositional bias: basic residues; the sequence is SRRRPTARRRPGGE.

The protein belongs to the universal ribosomal protein uS3 family. Part of the 30S ribosomal subunit. Forms a tight complex with proteins S10 and S14.

In terms of biological role, binds the lower part of the 30S subunit head. Binds mRNA in the 70S ribosome, positioning it for translation. The polypeptide is Small ribosomal subunit protein uS3 (Deinococcus geothermalis (strain DSM 11300 / CIP 105573 / AG-3a)).